The following is a 1382-amino-acid chain: Hepatocyte growth factor receptor (1382 aa).

The N-terminal stretch at Met1–Gly24 is a signal peptide. The Extracellular segment spans residues Glu25–Gly935. Residues Lys27–Leu516 enclose the Sema domain. N-linked (GlcNAc...) asparagine glycosylation occurs at Asn45. 4 disulfides stabilise this stretch: Cys95-Cys101, Cys98-Cys160, Cys133-Cys141, and Cys173-Cys176. N-linked (GlcNAc...) asparagine glycosylation occurs at Asn106. 2 N-linked (GlcNAc...) asparagine glycosylation sites follow: Asn203 and Asn359. Intrachain disulfides connect Cys299-Cys364 and Cys386-Cys398. 2 N-linked (GlcNAc...) asparagine glycosylation sites follow: Asn400 and Asn406. Cystine bridges form between Cys521-Cys539, Cys527-Cys562, Cys530-Cys546, and Cys542-Cys552. IPT/TIG domains are found at residues Pro564–Val656, Pro658–Arg740, and Pro743–Val837. Thr583 carries O-linked (Man) threonine glycosylation. 2 N-linked (GlcNAc...) asparagine glycosylation sites follow: Asn608 and Asn636. O-linked (Man) threonine glycans are attached at residues Thr677 and Thr762. 2 N-linked (GlcNAc...) asparagine glycosylation sites follow: Asn786 and Asn880. The chain crosses the membrane as a helical span at residues Leu936 to Trp956. At Leu957 to Glu1379 the chain is on the cytoplasmic side. Ser967 bears the Phosphoserine mark. Thr978 bears the Phosphothreonine mark. 3 positions are modified to phosphoserine: Ser991, Ser998, and Ser1001. At Tyr1004 the chain carries Phosphotyrosine. Positions Val1079–Ile1346 constitute a Protein kinase domain. Residues Ile1085–Val1093 and Lys1111 each bind ATP. Catalysis depends on Asp1205, which acts as the Proton acceptor. The interval Leu1213 to Thr1382 is interaction with RANBP9. Tyr1231 bears the Phosphotyrosine mark. Tyr1235 and Tyr1236 each carry phosphotyrosine; by autocatalysis. Residue Thr1290 is modified to Phosphothreonine. An interaction with MUC20 region spans residues Trp1321–Val1360. 2 positions are modified to phosphotyrosine; by autocatalysis: Tyr1350 and Tyr1357. Tyr1366 is modified (phosphotyrosine).

This sequence belongs to the protein kinase superfamily. Tyr protein kinase family. Heterodimer made of an alpha chain (50 kDa) and a beta chain (145 kDa) which are disulfide linked. Binds PLXNB1. Interacts when phosphorylated with downstream effectors including STAT3, PIK3R1, SRC, PCLG1, GRB2 and GAB1. Interacts with SPSB1, SPSB2 and SPSB4. Interacts with INPP5D/SHIP1. When phosphorylated at Tyr-1357, interacts with INPPL1/SHIP2. Interacts with RANBP9 and RANBP10, as well as SPSB1, SPSB2, SPSB3 and SPSB4. SPSB1 binding occurs in the presence and in the absence of HGF, however HGF treatment has a positive effect on this interaction. Interacts with MUC20; prevents interaction with GRB2 and suppresses hepatocyte growth factor-induced cell proliferation. Interacts with GRB10. Interacts with PTPN1 and PTPN2. Interacts with HSP90AA1 and HSP90AB1; the interaction suppresses MET kinase activity. Interacts with tensin TNS3. Interacts (when phosphorylated) with tensin TNS4 (via SH2 domain); the interaction increases MET protein stability by inhibiting MET endocytosis and subsequent lysosomal degradation. Autophosphorylated in response to ligand binding on Tyr-1235 and Tyr-1236 in the kinase domain leading to further phosphorylation of Tyr-1350 and Tyr-1357 in the C-terminal multifunctional docking site. Dephosphorylated by PTPRJ at Tyr-1350 and Tyr-1366. Dephosphorylated by PTPN1 and PTPN2. Post-translationally, ubiquitinated. Ubiquitination by CBL regulates the receptor stability and activity through proteasomal degradation. In terms of processing, O-mannosylation of IPT/TIG domains by TMEM260 is required for protein maturation. O-mannosylated residues are composed of single mannose glycans that are not elongated or modified. In terms of tissue distribution, expressed at highest levels in lung, liver and kidney, also expressed in stomach, intestine, spleen, testis and brain. Not expressed in heart or muscle.

It localises to the membrane. It carries out the reaction L-tyrosyl-[protein] + ATP = O-phospho-L-tyrosyl-[protein] + ADP + H(+). Its activity is regulated as follows. In its inactive state, the C-terminal tail interacts with the catalytic domain and inhibits the kinase activity. Upon ligand binding, the C-terminal tail is displaced and becomes phosphorylated, thus increasing the kinase activity. Its function is as follows. Receptor tyrosine kinase that transduces signals from the extracellular matrix into the cytoplasm by binding to hepatocyte growth factor/HGF ligand. Regulates many physiological processes including proliferation, scattering, morphogenesis and survival. Ligand binding at the cell surface induces autophosphorylation of MET on its intracellular domain that provides docking sites for downstream signaling molecules. Following activation by ligand, interacts with the PI3-kinase subunit PIK3R1, PLCG1, SRC, GRB2, STAT3 or the adapter GAB1. Recruitment of these downstream effectors by MET leads to the activation of several signaling cascades including the RAS-ERK, PI3 kinase-AKT, or PLCgamma-PKC. The RAS-ERK activation is associated with the morphogenetic effects while PI3K/AKT coordinates prosurvival effects. During embryonic development, MET signaling plays a role in gastrulation, development and migration of muscles and neuronal precursors, angiogenesis and kidney formation. In adults, participates in wound healing as well as organ regeneration and tissue remodeling. Also promotes differentiation and proliferation of hematopoietic cells. This Rattus norvegicus (Rat) protein is Hepatocyte growth factor receptor (Met).